Here is a 328-residue protein sequence, read N- to C-terminus: Arabinose 5-phosphate isomerase KdsD (328 aa).

In terms of domain architecture, SIS spans 42-184 (CEKMFWCKGK…AVALLKARGF (143 aa)). Residues 75–76 (GT), histidine 82, histidine 88, 114–123 (ALIPVLKRLH), 148–150 (KVA), threonine 222, and aspartate 275 contribute to the substrate site. A Zn(2+)-binding site is contributed by histidine 82. The CBS 1 domain occupies 210–268 (MHTGDEIPHVKKTASLRDALLEVTRKNLGMTVICDDNMMIEGIFTDGDLRRVFDMGVDV). Positions 277–328 (MTPGGIRVRPGILAVEALNLMQSRHITSVMVADGDHLLGVLHMHDLLRAGVV) constitute a CBS 2 domain.

It belongs to the SIS family. GutQ/KpsF subfamily. In terms of assembly, homotetramer.

The enzyme catalyses D-arabinose 5-phosphate = D-ribulose 5-phosphate. The protein operates within carbohydrate biosynthesis; 3-deoxy-D-manno-octulosonate biosynthesis; 3-deoxy-D-manno-octulosonate from D-ribulose 5-phosphate: step 1/3. It functions in the pathway bacterial outer membrane biogenesis; lipopolysaccharide biosynthesis. Involved in the biosynthesis of 3-deoxy-D-manno-octulosonate (KDO), a unique 8-carbon sugar component of lipopolysaccharides (LPSs). Catalyzes the reversible aldol-ketol isomerization between D-ribulose 5-phosphate (Ru5P) and D-arabinose 5-phosphate (A5P). This Shigella flexneri protein is Arabinose 5-phosphate isomerase KdsD (kdsD).